Consider the following 1253-residue polypeptide: Methionine synthase (1253 aa).

The 321-residue stretch at 6–326 (QDEIEAILRK…DHIREIAEAV (321 aa)) folds into the Hcy-binding domain. The Zn(2+) site is built by Cys-248, Cys-311, and Cys-312. A Pterin-binding domain is found at 359 to 620 (FVNIGERCNV…IHKDLLQLCE (262 aa)). (6S)-5,6,7,8-tetrahydrofolate is bound by residues 370–372 (GSK), Asp-437, Asn-458, Asp-525, Asn-567, Arg-573, and Arg-579. Residues 650 to 747 (QTDEWRNGSI…FMEKEREEAR (98 aa)) enclose the B12-binding N-terminal domain. Methylcob(III)alamin is bound by residues Glu-697, 770 to 774 (GDVHD), His-773, Ser-818, Thr-822, and Ala-874. The B12-binding domain maps to 760–895 (QGTIVLATVK…DENLKDDYFE (136 aa)). In terms of domain architecture, AdoMet activation spans 911–1253 (SLKERKYLPL…LGPILGYDTD (343 aa)). Residues Asp-962, Arg-1160, and 1215–1216 (YF) contribute to the S-adenosyl-L-methionine site. Thr-1252 carries the phosphothreonine modification.

It belongs to the vitamin-B12 dependent methionine synthase family. As to quaternary structure, monomer. Dimer. Forms a multiprotein complex with MMACHC, MMADHC and MTRR. Requires methylcob(III)alamin as cofactor. Zn(2+) serves as cofactor.

It is found in the cytoplasm. It carries out the reaction (6S)-5-methyl-5,6,7,8-tetrahydrofolate + L-homocysteine = (6S)-5,6,7,8-tetrahydrofolate + L-methionine. The protein operates within amino-acid biosynthesis; L-methionine biosynthesis via de novo pathway; L-methionine from L-homocysteine (MetH route): step 1/1. Catalyzes the transfer of a methyl group from methylcob(III)alamin (MeCbl) to homocysteine, yielding enzyme-bound cob(I)alamin and methionine in the cytosol. MeCbl is an active form of cobalamin (vitamin B12) used as a cofactor for methionine biosynthesis. Cob(I)alamin form is regenerated to MeCbl by a transfer of a methyl group from 5-methyltetrahydrofolate. The processing of cobalamin in the cytosol occurs in a multiprotein complex composed of at least MMACHC, MMADHC, MTRR (methionine synthase reductase) and MTR which may contribute to shuttle safely and efficiently cobalamin towards MTR in order to produce methionine. The sequence is that of Methionine synthase (Mtr) from Rattus norvegicus (Rat).